Consider the following 469-residue polypeptide: 6-phospho-beta-galactosidase (469 aa).

Residues Q19, H116, N159, E160, and N297 each coordinate D-galactose 6-phosphate. E160 functions as the Proton donor in the catalytic mechanism. Catalysis depends on E375, which acts as the Nucleophile. D-galactose 6-phosphate-binding residues include S428, W429, K435, and Y437.

Belongs to the glycosyl hydrolase 1 family.

The enzyme catalyses a 6-phospho-beta-D-galactoside + H2O = D-galactose 6-phosphate + an alcohol. The protein operates within carbohydrate metabolism; lactose degradation; D-galactose 6-phosphate and beta-D-glucose from lactose 6-phosphate: step 1/1. In Streptococcus equi subsp. zooepidemicus (strain MGCS10565), this protein is 6-phospho-beta-galactosidase.